We begin with the raw amino-acid sequence, 178 residues long: Peptide methionine sulfoxide reductase MsrA (178 aa).

Residue Cys11 is part of the active site.

Belongs to the MsrA Met sulfoxide reductase family.

It catalyses the reaction L-methionyl-[protein] + [thioredoxin]-disulfide + H2O = L-methionyl-(S)-S-oxide-[protein] + [thioredoxin]-dithiol. It carries out the reaction [thioredoxin]-disulfide + L-methionine + H2O = L-methionine (S)-S-oxide + [thioredoxin]-dithiol. In terms of biological role, has an important function as a repair enzyme for proteins that have been inactivated by oxidation. Catalyzes the reversible oxidation-reduction of methionine sulfoxide in proteins to methionine. This chain is Peptide methionine sulfoxide reductase MsrA, found in Natronomonas pharaonis (strain ATCC 35678 / DSM 2160 / CIP 103997 / JCM 8858 / NBRC 14720 / NCIMB 2260 / Gabara) (Halobacterium pharaonis).